A 129-amino-acid polypeptide reads, in one-letter code: Large ribosomal subunit protein uL22 (129 aa).

The protein belongs to the universal ribosomal protein uL22 family. In terms of assembly, part of the 50S ribosomal subunit.

In terms of biological role, this protein binds specifically to 23S rRNA; its binding is stimulated by other ribosomal proteins, e.g. L4, L17, and L20. It is important during the early stages of 50S assembly. It makes multiple contacts with different domains of the 23S rRNA in the assembled 50S subunit and ribosome. The globular domain of the protein is located near the polypeptide exit tunnel on the outside of the subunit, while an extended beta-hairpin is found that lines the wall of the exit tunnel in the center of the 70S ribosome. The protein is Large ribosomal subunit protein uL22 of Metamycoplasma hominis (strain ATCC 23114 / DSM 25592 / NBRC 14850 / NCTC 10111 / PG21) (Mycoplasma hominis).